We begin with the raw amino-acid sequence, 210 residues long: Large ribosomal subunit protein uL4 (210 aa).

Positions 41–51 are enriched in polar residues; the sequence is QNNARQGNASA. Residues 41 to 77 are disordered; that stretch reads QNNARQGNASAKTRAEVRGGGRKPWKQKGTGRARAGS. A compositionally biased stretch (basic residues) spans 60–71; that stretch reads GGRKPWKQKGTG.

It belongs to the universal ribosomal protein uL4 family. Part of the 50S ribosomal subunit.

Its function is as follows. One of the primary rRNA binding proteins, this protein initially binds near the 5'-end of the 23S rRNA. It is important during the early stages of 50S assembly. It makes multiple contacts with different domains of the 23S rRNA in the assembled 50S subunit and ribosome. Functionally, forms part of the polypeptide exit tunnel. The chain is Large ribosomal subunit protein uL4 from Synechocystis sp. (strain ATCC 27184 / PCC 6803 / Kazusa).